Reading from the N-terminus, the 157-residue chain is 2-C-methyl-D-erythritol 2,4-cyclodiphosphate synthase (157 aa).

Positions 9 and 11 each coordinate a divalent metal cation. 4-CDP-2-C-methyl-D-erythritol 2-phosphate-binding positions include 9-11 (DVH) and 35-36 (HS). His43 contacts a divalent metal cation. Residues 57–59 (DIG), 62–66 (FPDTD), 101–107 (AQKPKMA), 133–136 (TTTE), Phe140, and Arg143 contribute to the 4-CDP-2-C-methyl-D-erythritol 2-phosphate site.

The protein belongs to the IspF family. As to quaternary structure, homotrimer. It depends on a divalent metal cation as a cofactor.

The enzyme catalyses 4-CDP-2-C-methyl-D-erythritol 2-phosphate = 2-C-methyl-D-erythritol 2,4-cyclic diphosphate + CMP. It participates in isoprenoid biosynthesis; isopentenyl diphosphate biosynthesis via DXP pathway; isopentenyl diphosphate from 1-deoxy-D-xylulose 5-phosphate: step 4/6. In terms of biological role, involved in the biosynthesis of isopentenyl diphosphate (IPP) and dimethylallyl diphosphate (DMAPP), two major building blocks of isoprenoid compounds. Catalyzes the conversion of 4-diphosphocytidyl-2-C-methyl-D-erythritol 2-phosphate (CDP-ME2P) to 2-C-methyl-D-erythritol 2,4-cyclodiphosphate (ME-CPP) with a corresponding release of cytidine 5-monophosphate (CMP). The protein is 2-C-methyl-D-erythritol 2,4-cyclodiphosphate synthase of Halalkalibacterium halodurans (strain ATCC BAA-125 / DSM 18197 / FERM 7344 / JCM 9153 / C-125) (Bacillus halodurans).